Here is a 313-residue protein sequence, read N- to C-terminus: Methionyl-tRNA formyltransferase (313 aa).

113–116 (SLLP) is a binding site for (6S)-5,6,7,8-tetrahydrofolate.

This sequence belongs to the Fmt family.

The enzyme catalyses L-methionyl-tRNA(fMet) + (6R)-10-formyltetrahydrofolate = N-formyl-L-methionyl-tRNA(fMet) + (6S)-5,6,7,8-tetrahydrofolate + H(+). In terms of biological role, attaches a formyl group to the free amino group of methionyl-tRNA(fMet). The formyl group appears to play a dual role in the initiator identity of N-formylmethionyl-tRNA by promoting its recognition by IF2 and preventing the misappropriation of this tRNA by the elongation apparatus. The chain is Methionyl-tRNA formyltransferase from Francisella tularensis subsp. holarctica (strain FTNF002-00 / FTA).